Consider the following 375-residue polypeptide: MANMSRLNELVSEFGLVERRLGDPQALADGREYARLTRRHRELLPLVTLVREREQAEADLSGARELLQDPDMRDPDMKELAQLEVGGLQARLAEIEAELEVLLLPTDPDDGKDVILELRAGAGGAEAGLFVMDLLRMYERYAAGLNLKLNVLDAAESDLGGASKVVAEVTGDFAFRALKWERGVHRVQRVPATESQGRIHTSTATVAVLPEAEPGEVNLDLSEVRIDVFRSQGAGGQGVNTTDSAVRAVYRAGTPDEIMVICQDGRSQIKNREKALQVLTARLAERERAAREAQERQERASQVGSGDRSEKIRTYNYPQNRVTDHRLEGEDKNHPLDAVMAGGLAPVVSALARAQREEQLLAMSQEGAEDQHGAA.

Position 237 is an N5-methylglutamine (Gln237). The segment covering 289–299 has biased composition (basic and acidic residues); the sequence is AAREAQERQER. Residues 289–326 are disordered; sequence AAREAQERQERASQVGSGDRSEKIRTYNYPQNRVTDHR.

It belongs to the prokaryotic/mitochondrial release factor family. Post-translationally, methylated by PrmC. Methylation increases the termination efficiency of RF1.

It localises to the cytoplasm. In terms of biological role, peptide chain release factor 1 directs the termination of translation in response to the peptide chain termination codons UAG and UAA. This Deinococcus radiodurans (strain ATCC 13939 / DSM 20539 / JCM 16871 / CCUG 27074 / LMG 4051 / NBRC 15346 / NCIMB 9279 / VKM B-1422 / R1) protein is Peptide chain release factor 1 (prfA).